The following is a 342-amino-acid chain: Cytochrome c oxidase subunit 2 (342 aa).

Residues 1–22 (MKLWKTASRFLPLSFLTLFLTG) form the signal peptide. The N-palmitoyl cysteine moiety is linked to residue cysteine 23. Residue cysteine 23 is the site of S-diacylglycerol cysteine attachment. Topologically, residues 23–50 (CLGEENLTALDPKGPQAQWIYDNMILSI) are extracellular. Residues 23-249 (CLGEENLTAL…MSAEVEEPTE (227 aa)) are cytochrome c oxidase subunit II. The chain crosses the membrane as a helical span at residues 51–69 (IVMALVSIVVFAIFFIILA). The Cytoplasmic portion of the chain corresponds to 70–89 (KYRRKPGDDEIPKQVHGNTA). Residues 90–108 (LEITWTVIPIILLVILAVP) form a helical membrane-spanning segment. Topologically, residues 109-342 (TITGTFMFAD…AYLRSLKVME (234 aa)) are extracellular. Residues histidine 175, cysteine 210, cysteine 214, and histidine 218 each contribute to the Cu cation site. The Cytochrome c domain occupies 250–342 (TLANQGRQVF…AYLRSLKVME (93 aa)). 4 residues coordinate heme c: cysteine 264, cysteine 267, histidine 268, and methionine 317.

This sequence belongs to the cytochrome c oxidase subunit 2 family. It depends on Cu cation as a cofactor. The cofactor is heme c.

The protein resides in the cell membrane. It catalyses the reaction 4 Fe(II)-[cytochrome c] + O2 + 8 H(+)(in) = 4 Fe(III)-[cytochrome c] + 2 H2O + 4 H(+)(out). Its function is as follows. Subunits I and II form the functional core of the enzyme complex. Electrons originating in cytochrome c are transferred via heme a and Cu(A) to the binuclear center formed by heme a3 and Cu(B). The sequence is that of Cytochrome c oxidase subunit 2 (ctaC) from Alkalihalophilus pseudofirmus (strain ATCC BAA-2126 / JCM 17055 / OF4) (Bacillus pseudofirmus).